Consider the following 607-residue polypeptide: Elongation factor 4 (607 aa).

Residues 11–193 (ENIRNFSIIA…KIVEVVPAPD (183 aa)) enclose the tr-type G domain. GTP is bound by residues 23–28 (DHGKST) and 140–143 (NKID).

It belongs to the TRAFAC class translation factor GTPase superfamily. Classic translation factor GTPase family. LepA subfamily.

The protein resides in the cell membrane. It carries out the reaction GTP + H2O = GDP + phosphate + H(+). Its function is as follows. Required for accurate and efficient protein synthesis under certain stress conditions. May act as a fidelity factor of the translation reaction, by catalyzing a one-codon backward translocation of tRNAs on improperly translocated ribosomes. Back-translocation proceeds from a post-translocation (POST) complex to a pre-translocation (PRE) complex, thus giving elongation factor G a second chance to translocate the tRNAs correctly. Binds to ribosomes in a GTP-dependent manner. This chain is Elongation factor 4, found in Staphylococcus aureus (strain USA300).